A 141-amino-acid chain; its full sequence is MTAGPHRVVVLVFDGMKLLDLSGPAEVFSEANRFGADYRLSIVSADGSPVRSSIGMLVPADTDARAAAAHDTLVVVGGDALPGSPVGPVLGAAAKELAERAGRVASVCTGAFVLGAAGLLEGRRATTHWQHTATLARRCPS.

The protein belongs to the peptidase C56 family.

This is an uncharacterized protein from Streptomyces lividans.